A 212-amino-acid chain; its full sequence is Uracil phosphoribosyltransferase (212 aa).

5-phospho-alpha-D-ribose 1-diphosphate-binding positions include arginine 78, arginine 103, and 130-138 (DPMLATGSS). Residues isoleucine 193 and 198–200 (GDA) each bind uracil. Aspartate 199 lines the 5-phospho-alpha-D-ribose 1-diphosphate pocket.

Belongs to the UPRTase family. It depends on Mg(2+) as a cofactor.

The catalysed reaction is UMP + diphosphate = 5-phospho-alpha-D-ribose 1-diphosphate + uracil. Its pathway is pyrimidine metabolism; UMP biosynthesis via salvage pathway; UMP from uracil: step 1/1. Allosterically activated by GTP. Its function is as follows. Catalyzes the conversion of uracil and 5-phospho-alpha-D-ribose 1-diphosphate (PRPP) to UMP and diphosphate. The sequence is that of Uracil phosphoribosyltransferase from Pseudomonas syringae pv. tomato (strain ATCC BAA-871 / DC3000).